The sequence spans 555 residues: Chaperonin GroEL (555 aa).

ATP-binding positions include 29–32 (TLGP), lysine 50, 86–90 (DGTTT), glycine 418, and aspartate 499. Positions 528-555 (HEEDNNTGNRSGGGVGGGHHGGMGGMDF) are disordered. Residues 537–555 (RSGGGVGGGHHGGMGGMDF) are compositionally biased toward gly residues.

This sequence belongs to the chaperonin (HSP60) family. As to quaternary structure, forms a cylinder of 14 subunits composed of two heptameric rings stacked back-to-back. Interacts with the co-chaperonin GroES.

The protein resides in the cytoplasm. It catalyses the reaction ATP + H2O + a folded polypeptide = ADP + phosphate + an unfolded polypeptide.. In terms of biological role, together with its co-chaperonin GroES, plays an essential role in assisting protein folding. The GroEL-GroES system forms a nano-cage that allows encapsulation of the non-native substrate proteins and provides a physical environment optimized to promote and accelerate protein folding. The polypeptide is Chaperonin GroEL (Orientia tsutsugamushi (strain Ikeda) (Rickettsia tsutsugamushi)).